The chain runs to 934 residues: Serine/threonine-protein kinase PknD (934 aa).

The region spanning Tyr-4–Leu-296 is the Protein kinase domain. ATP is bound by residues Ile-10–Val-18 and Lys-33. The active-site Proton acceptor is Asp-138.

The protein belongs to the protein kinase superfamily. Ser/Thr protein kinase family. In terms of processing, autophosphorylated on serine and threonine residues.

The enzyme catalyses L-seryl-[protein] + ATP = O-phospho-L-seryl-[protein] + ADP + H(+). The catalysed reaction is L-threonyl-[protein] + ATP = O-phospho-L-threonyl-[protein] + ADP + H(+). Its function is as follows. Together with the serine/threonine kinase Pkn1, may play a role in the specific interactions with host proteins during intracellular growth. The sequence is that of Serine/threonine-protein kinase PknD from Chlamydia trachomatis serovar A (strain ATCC VR-571B / DSM 19440 / HAR-13).